A 145-amino-acid chain; its full sequence is UPF0201 protein LS215_1276 (145 aa).

It belongs to the UPF0201 family.

The polypeptide is UPF0201 protein LS215_1276 (Saccharolobus islandicus (strain L.S.2.15 / Lassen #1) (Sulfolobus islandicus)).